The chain runs to 545 residues: Carboxylesterase 5A (545 aa).

The N-terminal stretch at 1-28 (MSGMWVHPGRTLIWALWVLAAVIKGPAA) is a signal peptide. N-linked (GlcNAc...) (complex) asparagine glycosylation occurs at asparagine 86. An intrachain disulfide couples cysteine 94 to cysteine 121. Asparagine 134 carries an N-linked (GlcNAc...) asparagine glycan. Residue serine 226 is the Acyl-ester intermediate of the active site. Cysteine 281 and cysteine 292 form a disulfide bridge. Residue glutamate 346 is the Charge relay system of the active site. Residues asparagine 363 and asparagine 443 are each glycosylated (N-linked (GlcNAc...) asparagine). Catalysis depends on histidine 454, which acts as the Charge relay system.

The protein belongs to the type-B carboxylesterase/lipase family. N-glycosylated; contains a fucosylated complex carbohydrate. In terms of tissue distribution, present at high level in urine. Expressed in the kidney proximal straight tubular cells and is secreted from the apical compartment of the cells into the urine (at protein level). In mature cats, it is present at higher level in intact males than in castrated males or in intact or spayed females.

Its subcellular location is the secreted. It catalyses the reaction a carboxylic ester + H2O = an alcohol + a carboxylate + H(+). Carboxylesterase present at high level in urine that regulates production of felinine, a probable pheromone precursor. Probably acts by hydrolyzing the peptide bond of the felinine precursor 3-methylbutanol cyteinylglycine, producing felinine and glycine in cat urine. This chain is Carboxylesterase 5A (CES5A), found in Felis catus (Cat).